The primary structure comprises 198 residues: Succinate dehydrogenase [ubiquinone] cytochrome b subunit, mitochondrial (198 aa).

The transit peptide at 1–50 directs the protein to the mitochondrion; it reads MSAMMVKLGLNKSALLLKPSAFSRAAALSSSRRLLFNTARTNFLSTSPLK. Over 51-99 the chain is Mitochondrial matrix; that stretch reads NVASEMNTKAAIAEEQILNKQRAKRPISPHLTIYQPQLTWYLSSLHRIS. A ubiquinone-binding residues include Ser93 and Arg97. Residues 100–120 traverse the membrane as a helical segment; sequence LVLMGLGFYLFTILFGVSGLL. At 121–139 the chain is on the mitochondrial intermembrane side; the sequence is GLGLTTEKVSNWYHQKFSK. The helical transmembrane segment at 140–160 threads the bilayer; the sequence is ITEWSIKGSFAYLFAIHYGGA. His156 provides a ligand contact to heme. Residues 161–175 are Mitochondrial matrix-facing; sequence IRHLIWDTAKELTLK. Residues 176–196 form a helical membrane-spanning segment; that stretch reads GVYRTGYALIGFTAVLGTYLL. At 197-198 the chain is on the mitochondrial intermembrane side; that stretch reads TL.

This sequence belongs to the cytochrome b560 family. In terms of assembly, forms part of complex II containing four subunits: a flavoprotein (FP), an iron-sulfur protein (IP) and a cytochrome b composed of two integral membrane proteins. The cofactor is heme.

The protein resides in the mitochondrion inner membrane. It participates in carbohydrate metabolism; tricarboxylic acid cycle. Membrane-anchoring mono-heme cytochrome b subunit of succinate dehydrogenase (SDH) that is involved in system II of the mitochondrial electron transport chain and is responsible for transferring electrons from succinate to ubiquinone (coenzyme Q). SDH3 and SDH4 form the membrane dimer that anchors the catalytic dimer formed by SDH1 and SDH2 to the matrix surface of the mitochondrial inner membrane. Electrons originating from the catalytic dimer enter the membrane dimer for ubiquinone reduction. This chain is Succinate dehydrogenase [ubiquinone] cytochrome b subunit, mitochondrial (SDH3), found in Saccharomyces cerevisiae (strain ATCC 204508 / S288c) (Baker's yeast).